Consider the following 660-residue polypeptide: Bifunctional polymyxin resistance protein ArnA (660 aa).

The tract at residues 1-304 (MKTVVFAYHD…TLGLVQGSRL (304 aa)) is formyltransferase ArnAFT. (6R)-10-formyltetrahydrofolate is bound at residue 86 to 88 (HLI). Residue H104 is the Proton donor; for formyltransferase activity of the active site. (6R)-10-formyltetrahydrofolate is bound by residues R114 and 136-140 (VKRAD). The interval 314–660 (RRTRVLILGV…RTVDLTDKPL (347 aa)) is dehydrogenase ArnADH. Residues D347 and 368 to 369 (DI) contribute to the NAD(+) site. UDP-alpha-D-glucuronate is bound by residues A393, Y398, and 432-433 (TS). The active-site Proton acceptor; for decarboxylase activity is E434. Residues R460, N492, 526-535 (KLIDGGKQKR), and Y613 each bind UDP-alpha-D-glucuronate. R619 (proton donor; for decarboxylase activity) is an active-site residue.

In the N-terminal section; belongs to the Fmt family. UDP-L-Ara4N formyltransferase subfamily. This sequence in the C-terminal section; belongs to the NAD(P)-dependent epimerase/dehydratase family. UDP-glucuronic acid decarboxylase subfamily. In terms of assembly, homohexamer, formed by a dimer of trimers.

The catalysed reaction is UDP-alpha-D-glucuronate + NAD(+) = UDP-beta-L-threo-pentopyranos-4-ulose + CO2 + NADH. It catalyses the reaction UDP-4-amino-4-deoxy-beta-L-arabinose + (6R)-10-formyltetrahydrofolate = UDP-4-deoxy-4-formamido-beta-L-arabinose + (6S)-5,6,7,8-tetrahydrofolate + H(+). It participates in nucleotide-sugar biosynthesis; UDP-4-deoxy-4-formamido-beta-L-arabinose biosynthesis; UDP-4-deoxy-4-formamido-beta-L-arabinose from UDP-alpha-D-glucuronate: step 1/3. The protein operates within nucleotide-sugar biosynthesis; UDP-4-deoxy-4-formamido-beta-L-arabinose biosynthesis; UDP-4-deoxy-4-formamido-beta-L-arabinose from UDP-alpha-D-glucuronate: step 3/3. It functions in the pathway bacterial outer membrane biogenesis; lipopolysaccharide biosynthesis. Bifunctional enzyme that catalyzes the oxidative decarboxylation of UDP-glucuronic acid (UDP-GlcUA) to UDP-4-keto-arabinose (UDP-Ara4O) and the addition of a formyl group to UDP-4-amino-4-deoxy-L-arabinose (UDP-L-Ara4N) to form UDP-L-4-formamido-arabinose (UDP-L-Ara4FN). The modified arabinose is attached to lipid A and is required for resistance to polymyxin and cationic antimicrobial peptides. The sequence is that of Bifunctional polymyxin resistance protein ArnA from Escherichia coli O6:K15:H31 (strain 536 / UPEC).